The sequence spans 88 residues: Phosphocarrier protein HPr (88 aa).

Residues 1–88 (MEQASFVVID…EVLKKEGLAE (88 aa)) enclose the HPr domain. H15 acts as the Pros-phosphohistidine intermediate in catalysis. S46 carries the phosphoserine; by HPrK/P modification.

Belongs to the HPr family.

The protein localises to the cytoplasm. Its activity is regulated as follows. Phosphorylation on Ser-46 inhibits the phosphoryl transfer from enzyme I to HPr. Its function is as follows. General (non sugar-specific) component of the phosphoenolpyruvate-dependent sugar phosphotransferase system (sugar PTS). This major carbohydrate active-transport system catalyzes the phosphorylation of incoming sugar substrates concomitantly with their translocation across the cell membrane. The phosphoryl group from phosphoenolpyruvate (PEP) is transferred to the phosphoryl carrier protein HPr by enzyme I. Phospho-HPr then transfers it to the PTS EIIA domain. P-Ser-HPr interacts with the catabolite control protein A (CcpA), forming a complex that binds to DNA at the catabolite response elements cre, operator sites preceding a large number of catabolite-regulated genes. Thus, P-Ser-HPr is a corepressor in carbon catabolite repression (CCR), a mechanism that allows bacteria to coordinate and optimize the utilization of available carbon sources. P-Ser-HPr also plays a role in inducer exclusion, in which it probably interacts with several non-PTS permeases and inhibits their transport activity. In Listeria monocytogenes serovar 1/2a (strain ATCC BAA-679 / EGD-e), this protein is Phosphocarrier protein HPr (ptsH).